Here is a 184-residue protein sequence, read N- to C-terminus: dITP/XTP pyrophosphatase (184 aa).

Substrate is bound at residue 5–10; sequence SSNRHK. 2 residues coordinate Mg(2+): Glu33 and Asp62. Asp62 functions as the Proton acceptor in the catalytic mechanism. Substrate contacts are provided by residues Ser63, 136–139, Lys158, and 163–164; these read WGFD and HR.

It belongs to the HAM1 NTPase family. In terms of assembly, homodimer. It depends on Mg(2+) as a cofactor.

The enzyme catalyses XTP + H2O = XMP + diphosphate + H(+). It catalyses the reaction dITP + H2O = dIMP + diphosphate + H(+). It carries out the reaction ITP + H2O = IMP + diphosphate + H(+). In terms of biological role, pyrophosphatase that catalyzes the hydrolysis of nucleoside triphosphates to their monophosphate derivatives, with a high preference for the non-canonical purine nucleotides XTP (xanthosine triphosphate), dITP (deoxyinosine triphosphate) and ITP. Seems to function as a house-cleaning enzyme that removes non-canonical purine nucleotides from the nucleotide pool, thus preventing their incorporation into DNA/RNA and avoiding chromosomal lesions. The sequence is that of dITP/XTP pyrophosphatase from Korarchaeum cryptofilum (strain OPF8).